A 188-amino-acid polypeptide reads, in one-letter code: Elongation factor P (188 aa).

The protein belongs to the elongation factor P family.

It is found in the cytoplasm. It participates in protein biosynthesis; polypeptide chain elongation. Involved in peptide bond synthesis. Stimulates efficient translation and peptide-bond synthesis on native or reconstituted 70S ribosomes in vitro. Probably functions indirectly by altering the affinity of the ribosome for aminoacyl-tRNA, thus increasing their reactivity as acceptors for peptidyl transferase. The sequence is that of Elongation factor P from Cereibacter sphaeroides (strain KD131 / KCTC 12085) (Rhodobacter sphaeroides).